The chain runs to 404 residues: Histidine--tRNA ligase (404 aa).

This sequence belongs to the class-II aminoacyl-tRNA synthetase family.

The protein localises to the cytoplasm. It carries out the reaction tRNA(His) + L-histidine + ATP = L-histidyl-tRNA(His) + AMP + diphosphate + H(+). The sequence is that of Histidine--tRNA ligase from Nanoarchaeum equitans (strain Kin4-M).